Reading from the N-terminus, the 2389-residue chain is MPSATPSLDVPIAVVGLACRFPGDASSPSKFWDMVKNGRDAYSPTSSRWNSDAFYHPVNGKLNSLPTKGGHFLKEDPYVFDASFFNITAAEAIALDPKQRMALEVAYEAFENANMPLQQISGTQTACYIGSGPSDYRGSVERDFLHNPKYHLLGTGDEMISNRISHFFDIHGPSATIQTACSSSLMATHLACQSLKSGESDMAVTGGVSLMLTPDFTTHLNNLTFLNPQGRSKAFGESAGGYGRGEGCGIIILKRLDRAIQDGDSIRAVIRATGANSDGFTQGITMPSYEAQAALIKYVYESHGLDYDSTQYVEAHGTGTKVGDPIEMKAIYNTIGKGSSKPRKLYVGSVKPNIGHLESAAGVSGIIKGILAMEHNLIPPNIHFTKGNPNIPFHEWNVAVPLKPTAWPVSQTKRMSVSGFGMGGTNGHAVLESFNPSRLADAAVKHGDLTRFQKVRNKKRLFVFSSHDQAGFKRNADALVHHIENLGSAASSSEFLANLAHTLSGAKSSLSWRATCLAENTTEICDYLSNKPGDGAFRATSIENTTPRIGFVFTGQGAQWARMGVEMLDRQVFRDSIEQSATYLRDMGCLWDPIAELEKAQAESRLSYPEISQPICSVLQIALVDELQSWGVVPSRVVGHSSGEIAAAYSIGALSHRDAVAAAYFRGIAATKLQTDAPDLKGGMMAVGCSRDEADDVIEQSNLSGTAVVACVNSPSSVTLSGDVDSLEQLRAIFDDRKIFARRLKVEMAYHSRHMNRVFGTYSASIADLEPITQEETNEDGDFQIQTMVSSVTGQEVASELLGPYYWVRNLISPVLFSDAVKELVSPDDYDENKGSSSAVDLLIEIGPHSALSGPVEQILNHHGIRNVGYKSMLIRGRNAVETSLELASELYLDGIPLDISKVNGDLKVRRLTDLPPYQWNHSKVFRHENRIQTELMTRRFPSRSLIGAQVPMMDESQHVWRNFLRLADEPWLRGHKIGSTVLFPAAGLVSMAIEAARQLVEPGKTARSLRFREVSFSAAMALSEDVATEVILHMRPHLIATSGSTPSSWWELTISSCVGTSQLRDNCRGLITIDYADTTSEQMAKENANFENFMISEYYRVHNGCPDICSKEDFYGQFEKITWSYGEAFQGVENVHPGDGESTYDVRLVDIGETFSKDQSDRPFLIHAGTLDSILQGCLGSTYKNGRFETSKPVLPTFIGEMEISLDIPGDVGYVMPGLCESKRHGFKELSSNINIFDTGLSKVILSVVGYRVSELENDTEAQDTQQLEVDPADITSVVRWNCSVAIATQEELQKLMLASAPEARVLELVLLHIHNNPSATVIELTREIEPTNHTVMSQLPNGTVQSNQLHYAAISVETPLEGSTFNALSSVNSFYLGESDDSSRRGVTTADLLIVPQAVSDCENIENLLDRLITLGKPDAALILESQKSFDQLASILKTKGFQCVLEVQRSIALFKRQISQPTNGLPNCTSATRDFTIVDSLAPTEDTNAFSHNLRATLANQGYTVCVATWTEISACTETELEGKTIISLMELNKPMLSSLSESDFHDFRKLVLSSERLLWVNAGDDPSMGMIDGIRRTMRSEVAGIKFQVLRLSSLKTALQCGPSLVSRILTTESQDDEYRERNGMLEVARIYNNPEINADVRHCLTDSFRVQRLADQVKPLRLTIGKPGLLDTLAFIEDDRMKTALGETEIQVDIKATGINFKDIMAAMGLVGVSLIGQEASGIVTATGSAAASRFKPGDRVTLLWEGMHATKLQLDHRLAVHIPDSMSFEEASALPMVHVTAYHALINIAKLRRGQSILVHAAAGGVGQAALQLATYLGLTVYATVGSDDKRSLLMTKYNIPDAHIFCSRDASFLKAIKRVTGGHGVDCVLNSLSGELLRVSWACLAPFGTFVEIGLRDITNNMRLDMRPFSQSTTFAFINIANFFCAESLDALGNIISDTFDLVHQGVLRSPYPLTVYPVSELGTAFRTMQQGKHRGKLVLSFEGNAQVPVLCKAKDALHLKPDATYLFVGGLGGLGRSLAQEFIACGARHIAFVSRSGDTSKKAKATVDHLTALGAVVKAYQADIANEDAFLSAMQQCAADLPPIAGVLQMAMLLRDTLFEKMSYEDWTGPTRPKIQGTLSLHRYFSATRPLDFFLICSSISGIFGYAGQTAYAAANTFQDALAQHRRNQGLKAVAVDLGIMRDVGILAEQGTTGKLALWEAVLGIREKAFHALMKSIINRECKGEACPAQICTGLGTADVMKKFGLERPEHFADPRFGPLDVLNIDATSSPNADDSAVVSSPSTRLASASTFQEAVSIITDALVHKTAEILLMPVSEVDPSRPMYRYGVDSLVALEVRNWIARELQANMALLEILTAVPMREFAEKIAEKSKLVTMGNGER.

One can recognise a Ketosynthase family 3 (KS3) domain in the interval 9 to 433 (DVPIAVVGLA…GTNGHAVLES (425 aa)). Active-site for beta-ketoacyl synthase activity residues include cysteine 181, histidine 316, and histidine 356. The tract at residues 551-861 (FVFTGQGAQW…LSGPVEQILN (311 aa)) is malonyl-CoA:ACP transacylase (MAT) domain. Catalysis depends on serine 641, which acts as the For malonyltransferase activity. The segment at 944–1079 (RSLIGAQVPM…GLITIDYADT (136 aa)) is N-terminal hotdog fold. Positions 944–1263 (RSLIGAQVPM…VSELENDTEA (320 aa)) constitute a PKS/mFAS DH domain. The segment at 946–1262 (LIGAQVPMMD…RVSELENDTE (317 aa)) is dehydratase (DH) domain. Histidine 976 functions as the Proton acceptor; for dehydratase activity in the catalytic mechanism. Positions 1107–1263 (PDICSKEDFY…VSELENDTEA (157 aa)) are C-terminal hotdog fold. Aspartate 1173 serves as the catalytic Proton donor; for dehydratase activity. Residues 1673 to 1987 (GLLDTLAFIE…QGKHRGKLVL (315 aa)) form an enoylreductase (ER) domain region. Residues 2011 to 2191 (ATYLFVGGLG…VAVDLGIMRD (181 aa)) form a catalytic ketoreductase (KRc) domain region. The Carrier domain maps to 2302–2379 (EAVSIITDAL…EFAEKIAEKS (78 aa)). Serine 2339 is subject to O-(pantetheine 4'-phosphoryl)serine.

The protein operates within mycotoxin biosynthesis. Highly reducing polyketide synthase; part of the gene cluster that mediates the biosynthesis of 10,11-dehydrocurvularin, a prevalent fungal phytotoxin with heat shock response and immune-modulatory activities. The highly reducing polyketide synthase Dhc3 is responsible for biosynthesis up to the tetraketide stage. The non-reducing polyketide synthase Dhc5 then conducts four additional chain extension cycles, producing the unreduced part of the nascent octaketide from C-1 to C-8 in 10,11-dehydrocurvularin. The protein is Highly reducing polyketide synthase Dhc3 (Dhc3) of Alternaria cinerariae.